Consider the following 237-residue polypeptide: Peroxisomal membrane protein 11-1 (237 aa).

At 1 to 92 the chain is on the cytoplasmic side; that stretch reads MSTLDATRAE…TLVLLGKSKN (92 aa). A helical membrane pass occupies residues 93–113; the sequence is ALLSTFLFLDQFVWLGRTGIY. Topologically, residues 114-204 are lumenal; the sequence is KNKERTDRIV…VGLLQLSPKK (91 aa). The helical transmembrane segment at 205-223 threads the bilayer; it reads ITPRVTGAFGFVTSLISCY. Over 224-237 the chain is Cytoplasmic; that stretch reads QQLPSRAPAIKVKA.

The protein belongs to the peroxin-11 family. In terms of tissue distribution, expressed in seedlings, leaf sheaths, flag leaf, panicles and spikelets.

Its subcellular location is the peroxisome membrane. Involved in peroxisomal proliferation. In Oryza sativa subsp. japonica (Rice), this protein is Peroxisomal membrane protein 11-1 (PEX11-1).